Here is a 311-residue protein sequence, read N- to C-terminus: MQNIVRTAQVVERFKLQVIAGEEGLHRPVATPDLSRPGLVLAGYYTHYAKNRLQVLGKTELTFYASLSEEKRRERAKILCTEQTPGILITRGFDIPKEIEEEAEAANVPLMRTNAVTTSIESQITNFLEMELAPMTAMHGVLVDIYGVGVLIKGQSGVGKSETALELVKRGHRLVADDSVEIRQTGDQLLVGSAPKLIRHLLEIRGIGIIDVMTLFGAGAVRSHKKISLIVNLENWDAGKVYDRVGLDHNTMKIIDSEVPLLTIPVRPGRNLAVIIEVAAMNYRLQNMGINTAEEFAERLANAIQDTEGDL.

Residues histidine 139 and lysine 160 contribute to the active site. ATP is bound at residue 154 to 161 (GQSGVGKS). Serine 161 contacts Mg(2+). Aspartate 178 acts as the Proton acceptor; for phosphorylation activity. Proton donor; for dephosphorylation activity in catalysis. Residues 202 to 211 (LEIRGIGIID) form an important for the catalytic mechanism of both phosphorylation and dephosphorylation region. Mg(2+) is bound at residue glutamate 203. The active site involves arginine 244. The tract at residues 265-270 (PVRPGR) is important for the catalytic mechanism of dephosphorylation.

Belongs to the HPrK/P family. As to quaternary structure, homohexamer. The cofactor is Mg(2+).

The enzyme catalyses [HPr protein]-L-serine + ATP = [HPr protein]-O-phospho-L-serine + ADP + H(+). It carries out the reaction [HPr protein]-O-phospho-L-serine + phosphate + H(+) = [HPr protein]-L-serine + diphosphate. In terms of biological role, catalyzes the ATP- as well as the pyrophosphate-dependent phosphorylation of a specific serine residue in HPr, a phosphocarrier protein of the phosphoenolpyruvate-dependent sugar phosphotransferase system (PTS). HprK/P also catalyzes the pyrophosphate-producing, inorganic phosphate-dependent dephosphorylation (phosphorolysis) of seryl-phosphorylated HPr (P-Ser-HPr). The two antagonistic activities of HprK/P are regulated by several intracellular metabolites, which change their concentration in response to the absence or presence of rapidly metabolisable carbon sources (glucose, fructose, etc.) in the growth medium. Therefore, by controlling the phosphorylation state of HPr, HPrK/P is a sensor enzyme that plays a major role in the regulation of carbon metabolism and sugar transport: it mediates carbon catabolite repression (CCR), and regulates PTS-catalyzed carbohydrate uptake and inducer exclusion. This Exiguobacterium sp. (strain ATCC BAA-1283 / AT1b) protein is HPr kinase/phosphorylase.